Consider the following 647-residue polypeptide: Endogenous retrovirus group K member 8 Gag polyprotein (647 aa).

Residue Gly-2 is the site of N-myristoyl glycine attachment. Residues 165–264 (GKGPELVGPS…APPSRQGSEL (100 aa)) form a disordered region. Over residues 232-247 (GMPPAPQGREPYPQPP) the composition is skewed to pro residues. 2 CCHC-type zinc fingers span residues 544 to 561 (GKCYNCGQIGHLKKNCPV) and 580 to 597 (DLCPRCKKGKHWASQCRS). The segment at 598–641 (KFDKNGQPLSGNEQRGQPQAPQQTGAFPIQPFVPQGFQDNNPHC) is disordered. Over residues 604–622 (QPLSGNEQRGQPQAPQQTG) the composition is skewed to polar residues.

It belongs to the beta type-B retroviral Gag protein family. HERV class-II K(HML-2) gag subfamily. In terms of processing, myristoylation is essential for retroviral assembly. Alteration of the glycine residue leads to a block in the budding of particles and an accumulation of Gag inside the cell. Post-translationally, specific enzymatic cleavages may yield mature proteins.

The protein resides in the cell membrane. The products of the Gag polyproteins of infectious retroviruses perform highly complex orchestrated tasks during the assembly, budding, maturation, and infection stages of the viral replication cycle. During viral assembly, the proteins form membrane associations and self-associations that ultimately result in budding of an immature virion from the infected cell. Gag precursors also function during viral assembly to selectively bind and package two plus strands of genomic RNA. Endogenous Gag proteins may have kept, lost or modified their original function during evolution. This Homo sapiens (Human) protein is Endogenous retrovirus group K member 8 Gag polyprotein (ERVK-8).